A 285-amino-acid polypeptide reads, in one-letter code: Acrosomal protein SP-10 (285 aa).

The first 21 residues, 1–21, serve as a signal peptide directing secretion; it reads MNMFLLLMSLYLLGSARGTSG. The tract at residues 64-200 is disordered; the sequence is TLSEHGSSEH…GEQPSGAPIS (137 aa). 19 tandem repeats follow at residues 66-70, 71-75, 85-89, 91-95, 110-114, 115-119, 120-124, 125-129, 130-134, 135-139, 145-149, 150-154, 155-159, 160-164, 165-169, 170-174, 175-179, 180-184, and 190-194. The interval 66 to 95 is 3 X 5 AA repeats of S-E-H-[GA]-A; sequence SEHGSSEHGSREHTVAEHTPGEHAESEHAS. Over residues 69–95 the composition is skewed to basic and acidic residues; sequence GSSEHGSREHTVAEHTPGEHAESEHAS. Positions 85-184 are 7 X 5 AA repeats of S-G-E-H-[AL]; it reads PGEHAESEHA…SGEQSLGEHA (100 aa). The interval 110–194 is 9 X 5 AA repeats of [SV]-G-E-Q-[PSA]; it reads VGEQPSGEQP…LSEKPSGEQP (85 aa). N-linked (GlcNAc...) asparagine glycosylation is present at Asn-278.

As to expression, testis.

The protein resides in the cytoplasmic vesicle. Its subcellular location is the secretory vesicle. It localises to the acrosome. The polypeptide is Acrosomal protein SP-10 (ACRV1) (Papio hamadryas (Hamadryas baboon)).